Reading from the N-terminus, the 327-residue chain is Annexin A8-like protein 1 (327 aa).

Annexin repeat units follow at residues 21 to 92 (FNPD…ALMY), 93 to 164 (PPYR…CLLQ), 177 to 249 (ALAL…TVVK), and 253 to 324 (NLHS…SLVG). Met-266, Gly-268, Gly-270, and Asp-310 together coordinate Ca(2+).

This sequence belongs to the annexin family.

The chain is Annexin A8-like protein 1 from Homo sapiens (Human).